We begin with the raw amino-acid sequence, 923 residues long: Protein translocase subunit SecA (923 aa).

Residues glutamine 86, 104-108 (GEGKT), and aspartate 512 contribute to the ATP site. Zn(2+)-binding residues include cysteine 906, cysteine 908, cysteine 917, and histidine 918.

Belongs to the SecA family. In terms of assembly, monomer and homodimer. Part of the essential Sec protein translocation apparatus which comprises SecA, SecYEG and auxiliary proteins SecDF-YajC and YidC. The cofactor is Zn(2+).

The protein localises to the cell inner membrane. Its subcellular location is the cytoplasm. The catalysed reaction is ATP + H2O + cellular proteinSide 1 = ADP + phosphate + cellular proteinSide 2.. Functionally, part of the Sec protein translocase complex. Interacts with the SecYEG preprotein conducting channel. Has a central role in coupling the hydrolysis of ATP to the transfer of proteins into and across the cell membrane, serving both as a receptor for the preprotein-SecB complex and as an ATP-driven molecular motor driving the stepwise translocation of polypeptide chains across the membrane. The sequence is that of Protein translocase subunit SecA from Caulobacter vibrioides (strain ATCC 19089 / CIP 103742 / CB 15) (Caulobacter crescentus).